A 332-amino-acid polypeptide reads, in one-letter code: Lipoyl synthase (332 aa).

The [4Fe-4S] cluster site is built by Cys74, Cys79, Cys85, Cys100, Cys104, Cys107, and Ser314. In terms of domain architecture, Radical SAM core spans 85–303 (CFGKGTATFM…EQEAYRMGFS (219 aa)).

It belongs to the radical SAM superfamily. Lipoyl synthase family. The cofactor is [4Fe-4S] cluster.

It is found in the cytoplasm. It catalyses the reaction [[Fe-S] cluster scaffold protein carrying a second [4Fe-4S](2+) cluster] + N(6)-octanoyl-L-lysyl-[protein] + 2 oxidized [2Fe-2S]-[ferredoxin] + 2 S-adenosyl-L-methionine + 4 H(+) = [[Fe-S] cluster scaffold protein] + N(6)-[(R)-dihydrolipoyl]-L-lysyl-[protein] + 4 Fe(3+) + 2 hydrogen sulfide + 2 5'-deoxyadenosine + 2 L-methionine + 2 reduced [2Fe-2S]-[ferredoxin]. It participates in protein modification; protein lipoylation via endogenous pathway; protein N(6)-(lipoyl)lysine from octanoyl-[acyl-carrier-protein]: step 2/2. In terms of biological role, catalyzes the radical-mediated insertion of two sulfur atoms into the C-6 and C-8 positions of the octanoyl moiety bound to the lipoyl domains of lipoate-dependent enzymes, thereby converting the octanoylated domains into lipoylated derivatives. In Verminephrobacter eiseniae (strain EF01-2), this protein is Lipoyl synthase.